A 330-amino-acid chain; its full sequence is Short chain dehydrogenase yanD (330 aa).

Residues Lys57, Asp86, Asn113, Tyr204, and Lys208 each contribute to the NADP(+) site. Residue Tyr204 is the Proton donor of the active site. The Lowers pKa of active site Tyr role is filled by Lys208.

Belongs to the short-chain dehydrogenases/reductases (SDR) family.

The protein operates within secondary metabolite biosynthesis; terpenoid biosynthesis. Functionally, short chain dehydrogenase; part of the gene cluster that mediates the biosynthesis of yanuthone D, a fungal isoprenoid epoxycyclohexenone that acts as an antibiotic against fungi and bacteria. The first step of the pathway is the synthesis of 6-methylsalicylic acid (6-MSA) by the polyketide synthase yanA. 6-MSA is then converted to m-cresol by the decarboxylase yanB. The cytochrome P450 monooxygenase yanC then catalyzes the oxidation of m-cresol to toluquinol. Epoxidation of toluquinol is then performed by the short chain dehydrogenase yanD, with the help of yanE, and a further prenylation by yanG leads to 7-deacetoxyyanuthone A. The next step is the hydroxylation of C-22 of 7-deacetoxyyanuthone A by the cytochrome P450 monooxygenase yanH to yield 22-deacetylyanuthone A. O-Mevalon transferase yanI then attaches mevalon to the hydroxyl group of 22-deacetylyanuthone A to produce yanuthone E. Finally, the FAD-dependent monooxygenase yanF oxidizes the hydroxyl group at C15 of yanuthone E to form yanuthone D. Furthermore, several branching points in the pathway lead to the production of yanuthones F and G from 7-deacetoxyyanuthone A; yanuthones H and I from 22-deacetylyanuthone A; and yanuthone J from yanuthone E. YanD is also involved in the synthesis of yanuthone X1 which does not have 6-methylsalicylic acid (6-MSA) as precursor. The polypeptide is Short chain dehydrogenase yanD (Aspergillus niger (strain ATCC 1015 / CBS 113.46 / FGSC A1144 / LSHB Ac4 / NCTC 3858a / NRRL 328 / USDA 3528.7)).